A 476-amino-acid polypeptide reads, in one-letter code: Inner membrane transporter YcaM (476 aa).

Residues 1–9 (MAGNVQEKQ) are Cytoplasmic-facing. Residues 10–30 (LRWYNIALMSFITVWGFGNVV) traverse the membrane as a helical segment. Topologically, residues 31–38 (NNYANQGL) are periplasmic. The helical transmembrane segment at 39 to 59 (VVVFSWVFIFALYFTPYALIV) threads the bilayer. The Cytoplasmic portion of the chain corresponds to 60-80 (GQLGSTFKDGKGGVSTWIKHT). The helical transmembrane segment at 81–101 (MGPGLAYLAAWTYWVVHIPYL) threads the bilayer. Over 102–125 (AQKPQAILIALGWAMKGDGSLIKE) the chain is Periplasmic. A helical membrane pass occupies residues 126–146 (YSVVALQGLTLVLFIFFMWVA). At 147 to 154 (SRGMKSLK) the chain is on the cytoplasmic side. The chain crosses the membrane as a helical span at residues 155 to 175 (IVGSVAGIAMFVMSLLYVAMA). Residues 176–195 (VTAPAITEVHIATTNITWET) lie on the Periplasmic side of the membrane. The chain crosses the membrane as a helical span at residues 196 to 216 (FIPHIDFTYITTISMLVFAVG). At 217 to 240 (GAEKISPYVNQTRNPGKEFPKGML) the chain is on the cytoplasmic side. The chain crosses the membrane as a helical span at residues 241–261 (CLAVMVAVCAILGSLAMGMMF). Residues 262 to 291 (DSRNIPDDLMTNGQYYAFQKLGEYYNMGNT) are Periplasmic-facing. The helical transmembrane segment at 292–312 (LMVIYAIANTLGQVAALVFSI) threads the bilayer. The Cytoplasmic segment spans residues 313-343 (DAPLKVLLGDADSKYIPASLCRTNASGTPVN). Residues 344–364 (GYFLTLVLVAILIMLPTLGIG) form a helical membrane-spanning segment. At 365 to 375 (DMNNLYKWLLN) the chain is on the periplasmic side. A helical transmembrane segment spans residues 376 to 396 (LNSVVMPLRYLWVFVAFIAVV). Over 397–414 (RLAQKYKPEYVFIRNKPL) the chain is Cytoplasmic. Residues 415–435 (AMTVGIWCFAFTAFACLTGIF) traverse the membrane as a helical segment. Over 436–448 (PKMEAFTAEWTFQ) the chain is Periplasmic. The chain crosses the membrane as a helical span at residues 449-469 (LALNVATPFVLVGLGLIFPLL). Residues 470–476 (ARKANSK) lie on the Cytoplasmic side of the membrane.

The protein belongs to the amino acid-polyamine-organocation (APC) superfamily.

Its subcellular location is the cell inner membrane. This chain is Inner membrane transporter YcaM (ycaM), found in Escherichia coli (strain K12).